The primary structure comprises 267 residues: Phosphoethanolamine/phosphocholine phosphatase (267 aa).

The active-site Nucleophile is aspartate 32. Mg(2+) contacts are provided by aspartate 32 and aspartate 34. Aspartate 34 functions as the Proton donor in the catalytic mechanism. The substrate site is built by aspartate 43 and aspartate 123. Aspartate 203 is a Mg(2+) binding site.

The protein belongs to the HAD-like hydrolase superfamily. PHOSPHO family. Requires Mg(2+) as cofactor. As to expression, expressed at sites of mineralization in bone and cartilage. Highly expressed in osteoblast cell line SaOS-2 which produces a mineralized matrix, but not in MG-63 cell line, which do not mineralize.

The protein resides in the extracellular vesicle. The enzyme catalyses phosphoethanolamine + H2O = ethanolamine + phosphate. It carries out the reaction phosphocholine + H2O = choline + phosphate. In terms of biological role, phosphatase that has a high activity toward phosphoethanolamine (PEA) and phosphocholine (PCho). Involved in the generation of inorganic phosphate for bone mineralization. Acts in a non-redundant manner with PHOSPHO1 in skeletal mineralization: while PHOSPHO1 mediates the initiation of hydroxyapatite crystallization in the matrix vesicles (MVs), ALPL/TNAP catalyzes the spread of hydroxyapatite crystallization in the extracellular matrix. The chain is Phosphoethanolamine/phosphocholine phosphatase from Homo sapiens (Human).